The chain runs to 305 residues: Ribosomal RNA small subunit methyltransferase H (305 aa).

Residues 49–51 (GGH), Asp-68, Phe-100, Asp-116, and Gln-123 contribute to the S-adenosyl-L-methionine site.

Belongs to the methyltransferase superfamily. RsmH family.

It localises to the cytoplasm. It carries out the reaction cytidine(1402) in 16S rRNA + S-adenosyl-L-methionine = N(4)-methylcytidine(1402) in 16S rRNA + S-adenosyl-L-homocysteine + H(+). Specifically methylates the N4 position of cytidine in position 1402 (C1402) of 16S rRNA. The protein is Ribosomal RNA small subunit methyltransferase H of Synechocystis sp. (strain ATCC 27184 / PCC 6803 / Kazusa).